We begin with the raw amino-acid sequence, 372 residues long: tRNA N6-adenosine threonylcarbamoyltransferase (372 aa).

3 residues coordinate a divalent metal cation: His-133, His-137, and Tyr-154. Substrate is bound by residues 154–158, Asp-186, Gly-201, Glu-205, and Asn-301; that span reads YVSGG. Asp-330 is a binding site for a divalent metal cation.

Belongs to the KAE1 / TsaD family. Component of the EKC/KEOPS complex composed of at least BUD32, CGI121, GON7, KAE1 and PCC1; the whole complex dimerizes. Requires a divalent metal cation as cofactor.

The protein resides in the cytoplasm. It is found in the nucleus. It catalyses the reaction L-threonylcarbamoyladenylate + adenosine(37) in tRNA = N(6)-L-threonylcarbamoyladenosine(37) in tRNA + AMP + H(+). Component of the EKC/KEOPS complex that is required for the formation of a threonylcarbamoyl group on adenosine at position 37 (t(6)A37) in tRNAs that read codons beginning with adenine. The complex is probably involved in the transfer of the threonylcarbamoyl moiety of threonylcarbamoyl-AMP (TC-AMP) to the N6 group of A37. KAE1 likely plays a direct catalytic role in this reaction, but requires other protein(s) of the complex to fulfill this activity. The EKC/KEOPS complex also promotes both telomere uncapping and telomere elongation. The complex is required for efficient recruitment of transcriptional coactivators. The chain is tRNA N6-adenosine threonylcarbamoyltransferase from Candida albicans (strain SC5314 / ATCC MYA-2876) (Yeast).